The chain runs to 357 residues: Heat-inducible transcription repressor HrcA (357 aa).

Belongs to the HrcA family.

Its function is as follows. Negative regulator of class I heat shock genes (grpE-dnaK-dnaJ and groELS operons). Prevents heat-shock induction of these operons. This is Heat-inducible transcription repressor HrcA from Chlorobium luteolum (strain DSM 273 / BCRC 81028 / 2530) (Pelodictyon luteolum).